A 244-amino-acid chain; its full sequence is Glycoprotein 3 (244 aa).

Functionally, although P4 acquires its capsid proteins from helper phages such as P2, it possesses the ability to assemble capsids that are only one-third the size of the helper's capsid. The sid protein is responsible for the assembly of P4-sized shells. It forms a P4-specific scaffold with icosahedral symmetry on the outside of the procapsid-like particles. This Enterobacteria phage P4 (Bacteriophage P4) protein is Glycoprotein 3 (sid).